We begin with the raw amino-acid sequence, 333 residues long: Foldase protein PrsA (333 aa).

Positions 1-19 are cleaved as a signal peptide; it reads MKKRHLLIAGLACMTILGA. The N-palmitoyl cysteine moiety is linked to residue Cys20. A lipid anchor (S-diacylglycerol cysteine) is attached at Cys20. Residues 155 to 245 enclose the PpiC domain; sequence LIEVEASHIL…YGYHIILVTD (91 aa). The segment at 291 to 333 is disordered; sequence GLFDLPDAPPVEDTPEIDGEDASDEAEDQAEDADENAEEEDES. Positions 303–333 are enriched in acidic residues; that stretch reads DTPEIDGEDASDEAEDQAEDADENAEEEDES.

The protein belongs to the PrsA family.

The protein resides in the cell membrane. The enzyme catalyses [protein]-peptidylproline (omega=180) = [protein]-peptidylproline (omega=0). Plays a major role in protein secretion by helping the post-translocational extracellular folding of several secreted proteins. The polypeptide is Foldase protein PrsA (Halalkalibacterium halodurans (strain ATCC BAA-125 / DSM 18197 / FERM 7344 / JCM 9153 / C-125) (Bacillus halodurans)).